We begin with the raw amino-acid sequence, 343 residues long: Anthranilate phosphoribosyltransferase (343 aa).

Residues glycine 84, 87–88, threonine 92, 94–97, 112–120, and serine 124 contribute to the 5-phospho-alpha-D-ribose 1-diphosphate site; these read GD, NIST, and KHGNRGVSS. Glycine 84 is a binding site for anthranilate. Serine 96 contacts Mg(2+). Asparagine 115 is a binding site for anthranilate. Arginine 170 is an anthranilate binding site. Residues aspartate 229 and glutamate 230 each contribute to the Mg(2+) site.

It belongs to the anthranilate phosphoribosyltransferase family. Homodimer. It depends on Mg(2+) as a cofactor.

The enzyme catalyses N-(5-phospho-beta-D-ribosyl)anthranilate + diphosphate = 5-phospho-alpha-D-ribose 1-diphosphate + anthranilate. It functions in the pathway amino-acid biosynthesis; L-tryptophan biosynthesis; L-tryptophan from chorismate: step 2/5. In terms of biological role, catalyzes the transfer of the phosphoribosyl group of 5-phosphorylribose-1-pyrophosphate (PRPP) to anthranilate to yield N-(5'-phosphoribosyl)-anthranilate (PRA). The chain is Anthranilate phosphoribosyltransferase from Burkholderia orbicola (strain AU 1054).